The primary structure comprises 99 residues: DNA-binding protein Fis (99 aa).

The segment at residues Gln75–Lys94 is a DNA-binding region (H-T-H motif).

This sequence belongs to the transcriptional regulatory Fis family. Homodimer.

Its function is as follows. Activates ribosomal RNA transcription. Plays a direct role in upstream activation of rRNA promoters. The chain is DNA-binding protein Fis from Haemophilus influenzae (strain 86-028NP).